We begin with the raw amino-acid sequence, 210 residues long: tRNA (guanine-N(7)-)-methyltransferase (210 aa).

4 residues coordinate S-adenosyl-L-methionine: Glu-36, Glu-61, Asp-90, and Asp-112. Asp-112 is a catalytic residue. Residues Lys-116, Asp-148, and 188 to 191 (TEYE) contribute to the substrate site.

The protein belongs to the class I-like SAM-binding methyltransferase superfamily. TrmB family.

The enzyme catalyses guanosine(46) in tRNA + S-adenosyl-L-methionine = N(7)-methylguanosine(46) in tRNA + S-adenosyl-L-homocysteine. It participates in tRNA modification; N(7)-methylguanine-tRNA biosynthesis. Functionally, catalyzes the formation of N(7)-methylguanine at position 46 (m7G46) in tRNA. This chain is tRNA (guanine-N(7)-)-methyltransferase, found in Mycoplasma genitalium (strain ATCC 33530 / DSM 19775 / NCTC 10195 / G37) (Mycoplasmoides genitalium).